A 413-amino-acid chain; its full sequence is Histidinol-phosphate aminotransferase, chloroplastic (413 aa).

A chloroplast-targeting transit peptide spans 1-35 (MGVIELCNTSSICIGRANPSCCSIERNQRRRIICM). At Lys-273 the chain carries N6-(pyridoxal phosphate)lysine.

Belongs to the class-II pyridoxal-phosphate-dependent aminotransferase family. Histidinol-phosphate aminotransferase subfamily. As to quaternary structure, homodimer. Requires pyridoxal 5'-phosphate as cofactor. As to expression, expressed in flowers, leaves, stems and roots.

The protein resides in the plastid. It is found in the chloroplast. The enzyme catalyses L-histidinol phosphate + 2-oxoglutarate = 3-(imidazol-4-yl)-2-oxopropyl phosphate + L-glutamate. It functions in the pathway amino-acid biosynthesis; L-histidine biosynthesis; L-histidine from 5-phospho-alpha-D-ribose 1-diphosphate: step 7/9. This chain is Histidinol-phosphate aminotransferase, chloroplastic (HPA), found in Nicotiana plumbaginifolia (Leadwort-leaved tobacco).